The sequence spans 116 residues: UPF0102 protein LA_2381 (116 aa).

The protein belongs to the UPF0102 family.

The chain is UPF0102 protein LA_2381 from Leptospira interrogans serogroup Icterohaemorrhagiae serovar Lai (strain 56601).